The primary structure comprises 291 residues: Ribonuclease Z (291 aa).

Positions 61, 63, 65, 66, 133, 201, and 257 each coordinate Zn(2+). Catalysis depends on aspartate 65, which acts as the Proton acceptor.

This sequence belongs to the RNase Z family. As to quaternary structure, homodimer. Zn(2+) serves as cofactor.

The enzyme catalyses Endonucleolytic cleavage of RNA, removing extra 3' nucleotides from tRNA precursor, generating 3' termini of tRNAs. A 3'-hydroxy group is left at the tRNA terminus and a 5'-phosphoryl group is left at the trailer molecule.. Functionally, zinc phosphodiesterase, which displays some tRNA 3'-processing endonuclease activity. Probably involved in tRNA maturation, by removing a 3'-trailer from precursor tRNA. The polypeptide is Ribonuclease Z (Saccharolobus solfataricus (strain ATCC 35092 / DSM 1617 / JCM 11322 / P2) (Sulfolobus solfataricus)).